Reading from the N-terminus, the 150-residue chain is Heavy metal-associated isoprenylated plant protein 24 (150 aa).

One can recognise an HMA domain in the interval 26 to 89; sequence QTVALRVARI…AAKSTKKKVE (64 aa). 2 residues coordinate a metal cation: cysteine 37 and cysteine 40. Position 147 is a cysteine methyl ester (cysteine 147). Cysteine 147 is lipidated: S-farnesyl cysteine. A propeptide spans 148-150 (removed in mature form); it reads AIM.

Belongs to the HIPP family. As to quaternary structure, interacts with ZHD11/HB29.

In terms of biological role, heavy-metal-binding protein. The sequence is that of Heavy metal-associated isoprenylated plant protein 24 from Arabidopsis thaliana (Mouse-ear cress).